Reading from the N-terminus, the 127-residue chain is Modulator protein MzrA (127 aa).

Residues 1–10 lie on the Cytoplasmic side of the membrane; that stretch reads MVISPLALRR. A helical transmembrane segment spans residues 11-31; the sequence is LSYGLIALVLLSALILVWTAL. At 32-127 the chain is on the periplasmic side; sequence QRQESTLAIR…RLRDTSHRFG (96 aa).

The protein belongs to the MzrA family. Interacts with EnvZ.

The protein localises to the cell inner membrane. Functionally, modulates the activity of the EnvZ/OmpR two-component regulatory system, probably by directly modulating EnvZ enzymatic activity and increasing stability of phosphorylated OmpR. This Enterobacter sp. (strain 638) protein is Modulator protein MzrA.